Here is a 120-residue protein sequence, read N- to C-terminus: Large ribosomal subunit protein bL17 (120 aa).

This sequence belongs to the bacterial ribosomal protein bL17 family. As to quaternary structure, part of the 50S ribosomal subunit. Contacts protein L32.

In Geobacillus sp. (strain WCH70), this protein is Large ribosomal subunit protein bL17.